Here is a 204-residue protein sequence, read N- to C-terminus: Putative AgrB-like protein (204 aa).

Transmembrane regions (helical) follow at residues 52–74 (YGIA…YLWL), 87–107 (LNCT…FQNI), 111–131 (NWIV…FAPA), 151–168 (AMIG…IPFA), and 173–190 (LIMV…PLTY).

This sequence belongs to the AgrB family.

It is found in the cell membrane. Functionally, may be involved in the proteolytic processing of a quorum sensing system signal molecule precursor. This chain is Putative AgrB-like protein, found in Listeria monocytogenes serovar 1/2a (strain ATCC BAA-679 / EGD-e).